A 476-amino-acid chain; its full sequence is Proline dehydrogenase 2, mitochondrial (476 aa).

Residues 1 to 29 (MANRFLRPNLIHRFSTVSPVGPPTTIIPE) constitute a mitochondrion transit peptide.

The protein belongs to the proline oxidase family. FAD serves as cofactor. In terms of tissue distribution, expressed in the vascular tissue and in the abscission zone of petals, sepals, stamina, pistils and siliques. Not detected in petioles.

The protein resides in the mitochondrion. The enzyme catalyses L-proline + a quinone = (S)-1-pyrroline-5-carboxylate + a quinol + H(+). It functions in the pathway amino-acid degradation; L-proline degradation into L-glutamate; L-glutamate from L-proline: step 1/2. In terms of biological role, converts proline to delta-1-pyrroline-5-carboxylate. This is Proline dehydrogenase 2, mitochondrial (POX2) from Arabidopsis thaliana (Mouse-ear cress).